The chain runs to 450 residues: Divalent metal cation transporter MntH (450 aa).

Transmembrane regions (helical) follow at residues 34-54, 61-81, 108-128, 141-161, 170-190, 212-232, 263-283, 305-325, 361-381, 383-403, and 422-442; these read LSFLGPGLLVAVGYMDPGNWI, AQYGYTLLFVILISSLSAMLL, IAIIFWIIAELAIIATDIAEV, IPLIVGALITVLDVFLLLFIM, AIVGTFIFTVLFIFIFEVYIS, GILYIALGIIGATIMPHNLYL, IQLSIAFVVNCLLLVLGASLF, PVLGATMGAIMSTLFAVALLA, SLAVIPVIVCLIIFKGNAAKI, QLLVFSQVFLSIALPFCLIPL, and VNIISWTLIIILSILNVYLIV.

It belongs to the NRAMP family.

It localises to the cell membrane. Its function is as follows. H(+)-stimulated, divalent metal cation uptake system. The polypeptide is Divalent metal cation transporter MntH (Staphylococcus aureus (strain Mu3 / ATCC 700698)).